The chain runs to 618 residues: Kelch-like protein 40b (618 aa).

Positions 33-100 (VDCVLKIKDK…LYTSNINVTE (68 aa)) constitute a BTB domain. The BACK domain occupies 135 to 237 (CLAIFRLGLM…PRDYFVKNVE (103 aa)). The span at 264-284 (PELKKTKNKKSPSEEGQKKGD) shows a compositional bias: basic and acidic residues. The disordered stretch occupies residues 264–297 (PELKKTKNKKSPSEEGQKKGDEEEVEEEEEQEER). The segment covering 285-295 (EEEVEEEEEQE) has biased composition (acidic residues). 5 Kelch repeats span residues 356-408 (QIFV…EAEN), 409-458 (FIFV…SHNE), 459-506 (MIYV…IHKN), 508-553 (IYVV…SVSG), and 555-608 (LYAV…VLGV).

This sequence belongs to the KLHL40 family. As to quaternary structure, component of the BCR(KLHL40) E3 ubiquitin ligase complex. Expressed in skeletal muscle. Detected in the eye at much lower levels.

It is found in the cytoplasm. Its subcellular location is the myofibril. The protein localises to the sarcomere. The protein resides in the a band. It localises to the i band. In terms of biological role, substrate-specific adapter of a BCR (BTB-CUL3-RBX1) E3 ubiquitin ligase complex. Required for skeletal muscle development. The protein is Kelch-like protein 40b (klhl40b) of Danio rerio (Zebrafish).